The primary structure comprises 202 residues: Na(+)-translocating NADH-quinone reductase subunit E (202 aa).

6 helical membrane-spanning segments follow: residues 5–25 (VSLF…FLGM), 35–55 (VSTA…TVPL), 81–101 (FLGL…LEMF), 114–134 (GVFL…LFMV), 144–164 (VVYG…LAGI), and 180–200 (LGIT…FGGM).

This sequence belongs to the NqrDE/RnfAE family. Composed of six subunits; NqrA, NqrB, NqrC, NqrD, NqrE and NqrF.

It localises to the cell inner membrane. The enzyme catalyses a ubiquinone + n Na(+)(in) + NADH + H(+) = a ubiquinol + n Na(+)(out) + NAD(+). Functionally, NQR complex catalyzes the reduction of ubiquinone-1 to ubiquinol by two successive reactions, coupled with the transport of Na(+) ions from the cytoplasm to the periplasm. NqrA to NqrE are probably involved in the second step, the conversion of ubisemiquinone to ubiquinol. The polypeptide is Na(+)-translocating NADH-quinone reductase subunit E (Psychrobacter arcticus (strain DSM 17307 / VKM B-2377 / 273-4)).